A 186-amino-acid chain; its full sequence is Elongation factor P (186 aa).

Belongs to the elongation factor P family.

It is found in the cytoplasm. Its pathway is protein biosynthesis; polypeptide chain elongation. Functionally, involved in peptide bond synthesis. Stimulates efficient translation and peptide-bond synthesis on native or reconstituted 70S ribosomes in vitro. Probably functions indirectly by altering the affinity of the ribosome for aminoacyl-tRNA, thus increasing their reactivity as acceptors for peptidyl transferase. In Prochlorococcus marinus (strain MIT 9215), this protein is Elongation factor P.